We begin with the raw amino-acid sequence, 281 residues long: Lipoyl synthase (281 aa).

Residues cysteine 35, cysteine 40, cysteine 46, cysteine 61, cysteine 65, cysteine 68, and serine 274 each contribute to the [4Fe-4S] cluster site. The 217-residue stretch at 47–263 (FGCGQATFLI…RDEALALGFR (217 aa)) folds into the Radical SAM core domain.

This sequence belongs to the radical SAM superfamily. Lipoyl synthase family. Requires [4Fe-4S] cluster as cofactor.

It is found in the cytoplasm. It catalyses the reaction [[Fe-S] cluster scaffold protein carrying a second [4Fe-4S](2+) cluster] + N(6)-octanoyl-L-lysyl-[protein] + 2 oxidized [2Fe-2S]-[ferredoxin] + 2 S-adenosyl-L-methionine + 4 H(+) = [[Fe-S] cluster scaffold protein] + N(6)-[(R)-dihydrolipoyl]-L-lysyl-[protein] + 4 Fe(3+) + 2 hydrogen sulfide + 2 5'-deoxyadenosine + 2 L-methionine + 2 reduced [2Fe-2S]-[ferredoxin]. The protein operates within protein modification; protein lipoylation via endogenous pathway; protein N(6)-(lipoyl)lysine from octanoyl-[acyl-carrier-protein]: step 2/2. Catalyzes the radical-mediated insertion of two sulfur atoms into the C-6 and C-8 positions of the octanoyl moiety bound to the lipoyl domains of lipoate-dependent enzymes, thereby converting the octanoylated domains into lipoylated derivatives. In Trichlorobacter lovleyi (strain ATCC BAA-1151 / DSM 17278 / SZ) (Geobacter lovleyi), this protein is Lipoyl synthase.